The following is a 287-amino-acid chain: Glycine--tRNA ligase alpha subunit (287 aa).

The protein belongs to the class-II aminoacyl-tRNA synthetase family. Tetramer of two alpha and two beta subunits.

The protein localises to the cytoplasm. The enzyme catalyses tRNA(Gly) + glycine + ATP = glycyl-tRNA(Gly) + AMP + diphosphate. The chain is Glycine--tRNA ligase alpha subunit from Petrotoga mobilis (strain DSM 10674 / SJ95).